The chain runs to 1180 residues: Polyamine-transporting ATPase 13A2 (1180 aa).

Topologically, residues 1–44 (MSADSSPLVGSTPTGYGTLTIGTSIDPLSSSVSSVRLSGYCGSP) are cytoplasmic. The stretch at 45-65 (WRVIGYHVVVWMMAGIPLLLF) is an intramembrane region. Residues 66 to 235 (RWKPLWGVRL…KSYPQLLVDE (170 aa)) lie on the Cytoplasmic side of the membrane. S151 is subject to Phosphoserine. A helical membrane pass occupies residues 236-253 (ALNPYYGFQAFSIALWLA). The Lumenal segment spans residues 254-256 (DHY). A helical membrane pass occupies residues 257-276 (YWYALCIFLISSISICLSLY). The Cytoplasmic portion of the chain corresponds to 277-427 (KTRKQSQTLR…NFKFYKHSMK (151 aa)). A helical transmembrane segment spans residues 428–448 (FVAALSVLALLGTIYSIFILY). The Lumenal segment spans residues 449–463 (RNRVPLNEIVIRALD). The chain crosses the membrane as a helical span at residues 464–484 (LVTVVVPPALPAAMTVCTLYA). Residues 485 to 930 (QSRLRRQGIF…REGRCSLDTS (446 aa)) lie on the Cytoplasmic side of the membrane. D513 (4-aspartylphosphate intermediate) is an active-site residue. Mg(2+) is bound by residues D878 and D882. Residues 931–951 (FSVFKYMALYSLTQFISVLIL) form a helical membrane-spanning segment. Topologically, residues 952-957 (YTINTN) are lumenal. The helical transmembrane segment at 958 to 978 (LGDLQFLAIDLVITTTVAVLM) threads the bilayer. Residues 979 to 994 (SRTGPALVLGRVRPPG) are Cytoplasmic-facing. Residues 995–1015 (ALLSVPVLSSLLLQMVLVTGV) traverse the membrane as a helical segment. Over 1016 to 1048 (QLGGYFLTLAQPWFVPLNRTVAAPDNLPNYENT) the chain is Lumenal. N1033 carries an N-linked (GlcNAc...) asparagine glycan. Residues 1049–1069 (VVFSLSSFQYLILAAAVSKGA) traverse the membrane as a helical segment. Topologically, residues 1070–1080 (PFRRPLYTNVP) are cytoplasmic. A helical membrane pass occupies residues 1081–1101 (FLVALALLSSVLVGLVLVPGL). Topologically, residues 1102-1117 (LQGPLALRNITDTGFK) are lumenal. N1110 is a glycosylation site (N-linked (GlcNAc...) asparagine). Residues 1118–1138 (LLLLGLVTLNFVGAFMLESVL) form a helical membrane-spanning segment. Residues 1139–1180 (DQCLPACLRRLRPKRASKKRFKQLERELAEQPWPPLPAGPLR) lie on the Cytoplasmic side of the membrane.

Belongs to the cation transport ATPase (P-type) (TC 3.A.3) family. Type V subfamily. Interacts with MYCBP2; the interaction inhibits the ubiquitination of TSC2 by MYCBP2. Interacts with HDAC6; the interaction results in recruitment of HDAC6 to lysosomes to promote CTTN deacetylation. Autophosphorylated. Accumulates in an inactive autophosphorylated state and autophosphorylation is stimulated by phosphatidic acid and phosphatidylinositol 3,5-bisphosphate but not by Mn(2+) or Zn(2+). The presence of spermine results in a dose-dependent reduction in autophosphorylation. As to expression, expressed in brain; protein levels are markedly increased in brain from subjects with Parkinson disease and subjects with dementia with Lewy bodies. Detected in pyramidal neurons located throughout the cingulate cortex (at protein level). In the substantia nigra, it is found in neuromelanin-positive dopaminergic neurons (at protein level).

The protein localises to the lysosome membrane. It localises to the late endosome membrane. Its subcellular location is the endosome. The protein resides in the multivesicular body membrane. It is found in the cytoplasmic vesicle. The protein localises to the autophagosome membrane. It catalyses the reaction spermidine(out) + ATP + H2O = spermidine(in) + ADP + phosphate + H(+). It carries out the reaction spermine(out) + ATP + H2O = spermine(in) + ADP + phosphate + H(+). Its activity is regulated as follows. Accumulates in an inactive autophosphorylated state. The presence of spermine results in a dose-dependent reduction in autophosphorylation. Its function is as follows. ATPase which acts as a lysosomal polyamine exporter with high affinity for spermine. Also stimulates cellular uptake of polyamines and protects against polyamine toxicity. Plays a role in intracellular cation homeostasis and the maintenance of neuronal integrity. Contributes to cellular zinc homeostasis. Confers cellular protection against Mn(2+) and Zn(2+) toxicity and mitochondrial stress. Required for proper lysosomal and mitochondrial maintenance. Regulates the autophagy-lysosome pathway through the control of SYT11 expression at both transcriptional and post-translational levels. Facilitates recruitment of deacetylase HDAC6 to lysosomes to deacetylate CTTN, leading to actin polymerization, promotion of autophagosome-lysosome fusion and completion of autophagy. Promotes secretion of exosomes as well as secretion of SCNA via exosomes. Plays a role in lipid homeostasis. This chain is Polyamine-transporting ATPase 13A2, found in Homo sapiens (Human).